A 93-amino-acid polypeptide reads, in one-letter code: Transcription factor PRE3 (93 aa).

Positions S6–L61 constitute a bHLH domain.

In terms of assembly, homodimer. Interacts with BHLH 147, BHLH148, BHLH149, BHLH150 and IBH1. Interacts with SIEL. Expressed in root and shoot meristems, and young siliques. Low levels detected in all aerial tissues.

It localises to the nucleus. The protein resides in the cytoplasm. Atypical and probable non DNA-binding bHLH transcription factor required for MONOPTEROS-dependent root initiation in embryo. Promotes the correct definition of the hypophysis cell division plane. Transcriptionally controlled by MONOPTEROS. Moves from its site of synthesis in pro-embryos cells into the hypophysis. Regulates brassinosteroid (BR) signaling by sequestering negative BR signaling components. May function as positive regulator of gibberellin signaling. May play a role in the regulation of light signaling and possibly auxin signaling. This chain is Transcription factor PRE3 (PRE3), found in Arabidopsis thaliana (Mouse-ear cress).